We begin with the raw amino-acid sequence, 494 residues long: Nuclear distribution protein PAC1 (494 aa).

Residues 14–46 enclose the LisH domain; that stretch reads QKNELDKSVLRYLNWNYKQTVRHEHAQDYESVR. The stretch at 90–123 forms a coiled coil; it reads NSIVRLQKKIIELEQNTETLVSQIKDLNTQVSEL. 7 WD repeats span residues 153 to 192, 196 to 244, 251 to 292, 295 to 334, 347 to 395, 415 to 454, and 457 to 492; these read NVESSVTSVKLHPNLPIVFVATDHGKLYAFDLFNYTIPLA, SHTK…CKFQ, GHEH…SLKT, PHSQWVRSIDVLGDYIISGSHDTTLRLTHWPSGNGLSVGT, HFIE…LMAH, GHLSWVRDISIRGQYLFSCADDKSVRCWDLNTGQCLHVWE, and HTGFVNSLDLDVDFDSNVTPRQMMVTGGLDCKSNVF.

The protein belongs to the WD repeat LIS1/nudF family. Self-associates. Interacts with NDL1 and dynein.

It localises to the cytoplasm. It is found in the cytoskeleton. The protein resides in the spindle pole. Its function is as follows. Positively regulates the activity of the minus-end directed microtubule motor protein dynein. Plays a central role in positioning the mitotic spindle at the bud neck during cell division. Targets cytoplasmic dynein to microtubule plus ends, thereby promoting dynein-mediated microtubule sliding along the bud cortex and consequently the movement of the mitotic spindle to the bud neck. The polypeptide is Nuclear distribution protein PAC1 (Saccharomyces cerevisiae (strain JAY291) (Baker's yeast)).